A 428-amino-acid chain; its full sequence is Hydrolase acrC (428 aa).

Ser-248 is a catalytic residue.

The protein belongs to the AB hydrolase superfamily. FUS2 hydrolase family.

The protein operates within secondary metabolite biosynthesis. In terms of biological role, hydrolase; part of the cluster that mediates the biosynthesis of acurin A, a highly reduced polyketide coupled to a serine via a peptide bond. The activities of the highly reducing polyketide synthase acrA and the nonribosomal peptide synthetase acrB are collectively responsible for the synthesis of the acurin A core structure with a heptaketide backbone produced by acrA covalently fused to a L-serine by acrB. After the formation of the PK-NRP hybrid product, it is detached from acrB by reductive release to set up the formation of the lactam ring by aldol condensation. The hydrolyase acrC then catalyzes water loss to generate a double bond in the ring. This double bond is probably reduced, which is followed by three oxidations at C-22 to generate the carboxylic acid moiety, involving probably the FAD-binding monooxygenase acrE and the cytochrome P450 monooxygenases acrD and acrF. Finally, a last methylation step performed by the O-methyltransferase acrG leads to the production of acurin A. The polypeptide is Hydrolase acrC (Aspergillus aculeatus (strain ATCC 16872 / CBS 172.66 / WB 5094)).